Reading from the N-terminus, the 80-residue chain is uncharacterized protein (80 aa).

The N-terminal stretch at 1–15 is a signal peptide; that stretch reads MEVIVVIVVIVVVIA. Positions 23 to 44 are enriched in low complexity; sequence NSNSNSNNSSDSSNESNNSDSS. A disordered region spans residues 23–52; sequence NSNSNSNNSSDSSNESNNSDSSKNGGSDIY. Residues N29, N30, N36, N39, and N64 are each glycosylated (N-linked (GlcNAc...) asparagine).

The protein resides in the secreted. This is an uncharacterized protein from Dictyostelium discoideum (Social amoeba).